The following is a 217-amino-acid chain: Small ribosomal subunit protein uS11m (217 aa).

A mitochondrion-targeting transit peptide spans 1-59 (MLLQPVWKGCRWTQFVRPIRRWNSTGTNRGVPFSFKDISNQEDITNISYPSSSDSVLTK).

It belongs to the universal ribosomal protein uS11 family. Component of the mitochondrial small ribosomal subunit (mt-SSU). Mature yeast 74S mitochondrial ribosomes consist of a small (37S) and a large (54S) subunit. The 37S small subunit contains a 15S ribosomal RNA (15S mt-rRNA) and 34 different proteins. The 54S large subunit contains a 21S rRNA (21S mt-rRNA) and 46 different proteins.

The protein localises to the mitochondrion. Functionally, component of the mitochondrial ribosome (mitoribosome), a dedicated translation machinery responsible for the synthesis of mitochondrial genome-encoded proteins, including at least some of the essential transmembrane subunits of the mitochondrial respiratory chain. The mitoribosomes are attached to the mitochondrial inner membrane and translation products are cotranslationally integrated into the membrane. The polypeptide is Small ribosomal subunit protein uS11m (MRPS18) (Saccharomyces cerevisiae (strain ATCC 204508 / S288c) (Baker's yeast)).